A 291-amino-acid polypeptide reads, in one-letter code: Ribose-phosphate pyrophosphokinase (291 aa).

Residues 34 to 36 (DGE) and 93 to 94 (RQ) contribute to the ATP site. Mg(2+) is bound by residues H127 and D165. K188 is a catalytic residue. D-ribose 5-phosphate-binding positions include R190, D216, and 220–224 (STGGT).

The protein belongs to the ribose-phosphate pyrophosphokinase family. Class III (archaeal) subfamily. In terms of assembly, homodimer. The cofactor is Mg(2+).

It is found in the cytoplasm. It catalyses the reaction D-ribose 5-phosphate + ATP = 5-phospho-alpha-D-ribose 1-diphosphate + AMP + H(+). It functions in the pathway metabolic intermediate biosynthesis; 5-phospho-alpha-D-ribose 1-diphosphate biosynthesis; 5-phospho-alpha-D-ribose 1-diphosphate from D-ribose 5-phosphate (route I): step 1/1. In terms of biological role, involved in the biosynthesis of the central metabolite phospho-alpha-D-ribosyl-1-pyrophosphate (PRPP) via the transfer of pyrophosphoryl group from ATP to 1-hydroxyl of ribose-5-phosphate (Rib-5-P). The protein is Ribose-phosphate pyrophosphokinase of Saccharolobus solfataricus (strain ATCC 35092 / DSM 1617 / JCM 11322 / P2) (Sulfolobus solfataricus).